A 242-amino-acid polypeptide reads, in one-letter code: MLTRKIKLWDINAHITCRLCSGYLIDATTVTECLHTFCRSCLVKYLEENNTCPTCRIVIHQSHPLQYIGHDRTMQDIVYKLVPGLQEAEMRKQREFYHKLGMEVPGDIKGETCSAKQHLDSHRNGETKADDSSNKEAAEEKPEEDNDYHRSDEQVSICLECNSSKLRGLKRKWIRCSAQATVLHLKKFIAKKLNLSSFNELDILCNEEILGKDHTLKFVVVTRWRFKKAPLLLHYRPKMDLL.

The RING-type zinc finger occupies cysteine 17–arginine 56. The tract at residues alanine 115–histidine 149 is disordered. Positions glutamine 117 to glutamate 140 are enriched in basic and acidic residues. Residues serine 132–leucine 242 form an interaction with BCORL1 region.

As to quaternary structure, component of a PRC1-like complex that contains PCGF3, RNF2 and RYBP. Interacts with CBX6, CBX7 and CBX8. Interacts with BCORL1.

The protein resides in the nucleus. It localises to the nucleoplasm. Its function is as follows. Component of a Polycomb group (PcG) multiprotein PRC1-like complex, a complex class required to maintain the transcriptionally repressive state of many genes, including Hox genes, throughout development. PcG PRC1 complex acts via chromatin remodeling and modification of histones; it mediates monoubiquitination of histone H2A 'Lys-119', rendering chromatin heritably changed in its expressibility. Within the PRC1-like complex, regulates RNF2 ubiquitin ligase activity. Plays a redundant role with PCGF5 as part of a PRC1-like complex that mediates monoubiquitination of histone H2A 'Lys-119' on the X chromosome and is required for normal silencing of one copy of the X chromosome in XX females. This Homo sapiens (Human) protein is Polycomb group RING finger protein 3 (PCGF3).